A 366-amino-acid chain; its full sequence is sn-glycerol-3-phosphate import ATP-binding protein UgpC (366 aa).

Positions 4–235 (VTLRNVRKTY…PASTFVASFI (232 aa)) constitute an ABC transporter domain. 37 to 44 (GPSGCGKS) contacts ATP.

This sequence belongs to the ABC transporter superfamily. sn-glycerol-3-phosphate importer (TC 3.A.1.1.3) family. In terms of assembly, the complex is composed of two ATP-binding proteins (UgpC), two transmembrane proteins (UgpA and UgpE) and a solute-binding protein (UgpB).

It is found in the cell inner membrane. The enzyme catalyses sn-glycerol 3-phosphate(out) + ATP + H2O = sn-glycerol 3-phosphate(in) + ADP + phosphate + H(+). In terms of biological role, part of the ABC transporter complex UgpBAEC involved in sn-glycerol-3-phosphate (G3P) import. Responsible for energy coupling to the transport system. This chain is sn-glycerol-3-phosphate import ATP-binding protein UgpC, found in Rhodopseudomonas palustris (strain BisB18).